The sequence spans 728 residues: 1,4-alpha-glucan branching enzyme GlgB (728 aa).

Asp-405 (nucleophile) is an active-site residue. The active-site Proton donor is Glu-458.

It belongs to the glycosyl hydrolase 13 family. GlgB subfamily. As to quaternary structure, monomer.

It catalyses the reaction Transfers a segment of a (1-&gt;4)-alpha-D-glucan chain to a primary hydroxy group in a similar glucan chain.. It participates in glycan biosynthesis; glycogen biosynthesis. Catalyzes the formation of the alpha-1,6-glucosidic linkages in glycogen by scission of a 1,4-alpha-linked oligosaccharide from growing alpha-1,4-glucan chains and the subsequent attachment of the oligosaccharide to the alpha-1,6 position. This is 1,4-alpha-glucan branching enzyme GlgB from Serratia proteamaculans (strain 568).